Here is a 42-residue protein sequence, read N- to C-terminus: Cytochrome b559 subunit beta (42 aa).

Residues 17–33 (WLTIHALAVPTVFFLGA) traverse the membrane as a helical segment. A heme-binding site is contributed by histidine 21.

It belongs to the PsbE/PsbF family. As to quaternary structure, heterodimer of an alpha subunit and a beta subunit. PSII is composed of 1 copy each of membrane proteins PsbA, PsbB, PsbC, PsbD, PsbE, PsbF, PsbH, PsbI, PsbJ, PsbK, PsbL, PsbM, PsbT, PsbX, PsbY, PsbZ, Psb30/Ycf12, at least 3 peripheral proteins of the oxygen-evolving complex and a large number of cofactors. It forms dimeric complexes. Requires heme b as cofactor.

It localises to the plastid. The protein localises to the chloroplast thylakoid membrane. Its function is as follows. This b-type cytochrome is tightly associated with the reaction center of photosystem II (PSII). PSII is a light-driven water:plastoquinone oxidoreductase that uses light energy to abstract electrons from H(2)O, generating O(2) and a proton gradient subsequently used for ATP formation. It consists of a core antenna complex that captures photons, and an electron transfer chain that converts photonic excitation into a charge separation. The chain is Cytochrome b559 subunit beta from Emiliania huxleyi (Coccolithophore).